A 551-amino-acid polypeptide reads, in one-letter code: Palmdelphin (551 aa).

Position 1 is an N-acetylmethionine (methionine 1). The stretch at 12 to 106 (QAITDKRKIQ…LQISANEEVI (95 aa)) forms a coiled coil. A Glycyl lysine isopeptide (Lys-Gly) (interchain with G-Cter in SUMO2) cross-link involves residue lysine 125. Residues serine 135 and serine 163 each carry the phosphoserine modification. Lysine 178 is covalently cross-linked (Glycyl lysine isopeptide (Lys-Gly) (interchain with G-Cter in SUMO1); alternate). Lysine 178 participates in a covalent cross-link: Glycyl lysine isopeptide (Lys-Gly) (interchain with G-Cter in SUMO2); alternate. Over residues 247 to 258 (ERNSKSPTEYHE) the composition is skewed to basic and acidic residues. Residues 247-267 (ERNSKSPTEYHEPVYANPFCR) form a disordered region. The residue at position 270 (threonine 270) is a Phosphothreonine. Disordered stretches follow at residues 298-387 (HESE…CSSP) and 452-536 (EDDE…DPSL). A phosphoserine mark is found at serine 322, serine 350, serine 371, serine 376, serine 385, and serine 386. Over residues 484–495 (KRSEVSPHENTN) the composition is skewed to basic and acidic residues. A phosphoserine mark is found at serine 498, serine 515, and serine 520.

Belongs to the paralemmin family. Interacts with GLUL. Phosphorylated. As to expression, expressed in the brain and the spinal cord. Expressed in the anterior olfactory nucleus, the olfactory tubercle, the nucleus supraopticus, the nucleus of the lateral olfactory tract, the piriform cortex, the cortico-amygdaloid transition zone, the septofimbrial nucleus and the indusium griseum (at protein level).

The protein localises to the cytoplasm. Its subcellular location is the cell projection. It localises to the dendrite. The protein resides in the dendritic spine. The polypeptide is Palmdelphin (Palmd) (Rattus norvegicus (Rat)).